We begin with the raw amino-acid sequence, 197 residues long: Carnitine operon protein CaiE (197 aa).

It belongs to the transferase hexapeptide repeat family.

It functions in the pathway amine and polyamine metabolism; carnitine metabolism. Its function is as follows. Overproduction of CaiE stimulates the activity of CaiB and CaiD. In Citrobacter koseri (strain ATCC BAA-895 / CDC 4225-83 / SGSC4696), this protein is Carnitine operon protein CaiE.